The primary structure comprises 624 residues: Dihydroxy-acid dehydratase (624 aa).

Asp-81 provides a ligand contact to Mg(2+). Cys-122 contacts [2Fe-2S] cluster. Asp-123 and Lys-124 together coordinate Mg(2+). Lys-124 is subject to N6-carboxylysine. Cys-195 is a [2Fe-2S] cluster binding site. Residue Glu-499 coordinates Mg(2+). Ser-525 functions as the Proton acceptor in the catalytic mechanism.

The protein belongs to the IlvD/Edd family. As to quaternary structure, homodimer. [2Fe-2S] cluster serves as cofactor. It depends on Mg(2+) as a cofactor.

It carries out the reaction (2R)-2,3-dihydroxy-3-methylbutanoate = 3-methyl-2-oxobutanoate + H2O. The catalysed reaction is (2R,3R)-2,3-dihydroxy-3-methylpentanoate = (S)-3-methyl-2-oxopentanoate + H2O. The protein operates within amino-acid biosynthesis; L-isoleucine biosynthesis; L-isoleucine from 2-oxobutanoate: step 3/4. It functions in the pathway amino-acid biosynthesis; L-valine biosynthesis; L-valine from pyruvate: step 3/4. Functionally, functions in the biosynthesis of branched-chain amino acids. Catalyzes the dehydration of (2R,3R)-2,3-dihydroxy-3-methylpentanoate (2,3-dihydroxy-3-methylvalerate) into 2-oxo-3-methylpentanoate (2-oxo-3-methylvalerate) and of (2R)-2,3-dihydroxy-3-methylbutanoate (2,3-dihydroxyisovalerate) into 2-oxo-3-methylbutanoate (2-oxoisovalerate), the penultimate precursor to L-isoleucine and L-valine, respectively. The protein is Dihydroxy-acid dehydratase of Shewanella baltica (strain OS155 / ATCC BAA-1091).